A 129-amino-acid polypeptide reads, in one-letter code: UPF0212 protein MM_2357 (129 aa).

This sequence belongs to the UPF0212 family.

The protein is UPF0212 protein MM_2357 of Methanosarcina mazei (strain ATCC BAA-159 / DSM 3647 / Goe1 / Go1 / JCM 11833 / OCM 88) (Methanosarcina frisia).